Here is a 257-residue protein sequence, read N- to C-terminus: Putative hydro-lyase YcsI (257 aa).

The protein belongs to the D-glutamate cyclase family.

The chain is Putative hydro-lyase YcsI (ycsI) from Bacillus subtilis (strain 168).